Consider the following 386-residue polypeptide: Succinate--CoA ligase [ADP-forming] subunit beta (386 aa).

In terms of domain architecture, ATP-grasp spans 9–244 (KEILKQYGVK…LDEEDEKEIE (236 aa)). Residues Lys46, 53-55 (GRG), Glu99, Cys102, and Glu107 contribute to the ATP site. Mg(2+)-binding residues include Asn199 and Asp213. Substrate is bound by residues Asn264 and 321–323 (GIM).

It belongs to the succinate/malate CoA ligase beta subunit family. Heterotetramer of two alpha and two beta subunits. Mg(2+) serves as cofactor.

It carries out the reaction succinate + ATP + CoA = succinyl-CoA + ADP + phosphate. It catalyses the reaction GTP + succinate + CoA = succinyl-CoA + GDP + phosphate. The protein operates within carbohydrate metabolism; tricarboxylic acid cycle; succinate from succinyl-CoA (ligase route): step 1/1. Functionally, succinyl-CoA synthetase functions in the citric acid cycle (TCA), coupling the hydrolysis of succinyl-CoA to the synthesis of either ATP or GTP and thus represents the only step of substrate-level phosphorylation in the TCA. The beta subunit provides nucleotide specificity of the enzyme and binds the substrate succinate, while the binding sites for coenzyme A and phosphate are found in the alpha subunit. This is Succinate--CoA ligase [ADP-forming] subunit beta from Brevibacillus brevis (strain 47 / JCM 6285 / NBRC 100599).